Here is a 654-residue protein sequence, read N- to C-terminus: MSLAAYCVICCRRIGTSTSPPKSGTHWRDIRNIIKFTGSLILGGSLFLTYEVLALKKAVTLDTQVVEREKMKSYIYVHTVSLDKGENHGIAWQARKELHKAVRKVLATSAKILRNPFADPFSTVDIEDHECAVWLLLRKSKSDDKTTRLEAVREMSETHHWHDYQYRIIAQACDPKTLIGLARSEESDLRFFLLPPPLPSLKEDSSTEEELRQLLASLPQTELDECIQYFTSLALSESSQSLAAQKGGLWCFGGNGLPYAESFGEVPSATVEMFCLEAIVKHSEISTHCDKIEANGGLQLLQRLYRLHKDCPKVQRNIMRVIGNMALNEHLHSSIVRSGWVSIMAEAMKSPHIMESSHAARILANLDRETVQEKYQDGVYVLHPQYRTSQPIKADVLFIHGLMGAAFKTWRQQDSEQAVIEKPMEDEDRYTTCWPKTWLAKDCPALRIISVEYDTSLSDWRARCPMERKSIAFRSNELLRKLRAAGVGDRPVVWISHSMGGLLVKKMLLEASTKPEMSTVINNTRGIIFYSVPHHGSRLAEYSVNIRYLLFPSLEVKELSKDSPALKTLQDDFLEFAKDKNFQVLNFVETLPTYIGSMIKLHVVPVESADLGIGDLIPVDVNHLNICKPKKKDAFLYQRTLQFIREALAKDLEN.

Residues 32–54 traverse the membrane as a helical segment; the sequence is NIIKFTGSLILGGSLFLTYEVLA.

The protein belongs to the SERAC1 family. In terms of tissue distribution, widely expressed, with predominant expression in skeletal muscle and brain. In the brain, highest levels are found in the frontal and occipital cortices, cerebellum and hippocampus.

It localises to the mitochondrion membrane. Its subcellular location is the endoplasmic reticulum. The protein localises to the mitochondrion. In terms of biological role, facilitates the transport of serine from the cytosol to the mitochondria by interacting with and stabilizing Sideroflexin-1 (SFXN1), a mitochondrial serine transporter, playing a fundamental role in the one-carbon cycle responsible for the synthesis of nucleotides needed for mitochondrial DNA replication. Plays an important role in the phosphatidylglycerol (PG) remodeling that is essential for both mitochondrial function and intracellular cholesterol trafficking. Specifically involved in the exchange of the sn-1 acyl chain from PG 16:0/18:1(9Z) (also known as 1-hexadecanoyl-2-(9Z-octadecenoyl)-sn-glycero-3-phospho-(1'-sn-glycerol)) to PG 18:0/18:1(9Z) (also known as 1-octadecanoyl-2-(9Z-octadecenoyl)-sn-glycero-3-phospho-(1'-sn-glycerol)), a step needed in the bis(monoacylglycerol)phosphate biosynthetic pathway. May have acyltransferase activity although the mechanism for PG remodeling has not been determined. This is Protein SERAC1 (SERAC1) from Homo sapiens (Human).